A 336-amino-acid chain; its full sequence is tRNA (guanine(10)-N2)-dimethyltransferase (336 aa).

The 98-residue stretch at 50-147 folds into the THUMP domain; the sequence is KILKKRLAYA…NDRFILTRRL (98 aa).

This sequence belongs to the methyltransferase superfamily. Trm-G10 family. As to quaternary structure, monomer.

Its subcellular location is the cytoplasm. It carries out the reaction guanosine(10) in tRNA + 2 S-adenosyl-L-methionine = N(2)-dimethylguanosine(10) in tRNA + 2 S-adenosyl-L-homocysteine + 2 H(+). In terms of biological role, catalyzes the adenosylmethionine-dependent methylation of the exocyclic amino group (N(2)) of guanosine at position 10 of various tRNAs. Acts via a two-step process that leads to the formation of either N(2)-monomethyl (m(2)G) or N(2)-dimethylguanosine (m(2)(2)G). This is tRNA (guanine(10)-N2)-dimethyltransferase (trmG10) from Methanothermobacter thermautotrophicus (strain ATCC 29096 / DSM 1053 / JCM 10044 / NBRC 100330 / Delta H) (Methanobacterium thermoautotrophicum).